The following is a 301-amino-acid chain: Acetylglutamate kinase (301 aa).

Substrate contacts are provided by residues glycine 71 to glycine 72, arginine 93, and asparagine 198.

The protein belongs to the acetylglutamate kinase family. ArgB subfamily.

It is found in the cytoplasm. It carries out the reaction N-acetyl-L-glutamate + ATP = N-acetyl-L-glutamyl 5-phosphate + ADP. It participates in amino-acid biosynthesis; L-arginine biosynthesis; N(2)-acetyl-L-ornithine from L-glutamate: step 2/4. Catalyzes the ATP-dependent phosphorylation of N-acetyl-L-glutamate. The polypeptide is Acetylglutamate kinase (Zymomonas mobilis subsp. mobilis (strain ATCC 31821 / ZM4 / CP4)).